The following is a 566-amino-acid chain: Protein RocB (566 aa).

Involved in arginine degradative pathway. This is Protein RocB (rocB) from Bacillus subtilis (strain 168).